The primary structure comprises 266 residues: Glucosamine-6-phosphate deaminase (266 aa).

Residue aspartate 72 is the Proton acceptor; for enolization step of the active site. Aspartate 141 serves as the catalytic For ring-opening step. Histidine 143 functions as the Proton acceptor; for ring-opening step in the catalytic mechanism. Glutamate 148 acts as the For ring-opening step in catalysis.

It belongs to the glucosamine/galactosamine-6-phosphate isomerase family. NagB subfamily. As to quaternary structure, homohexamer.

The catalysed reaction is alpha-D-glucosamine 6-phosphate + H2O = beta-D-fructose 6-phosphate + NH4(+). It functions in the pathway amino-sugar metabolism; N-acetylneuraminate degradation; D-fructose 6-phosphate from N-acetylneuraminate: step 5/5. Its activity is regulated as follows. Allosterically activated by N-acetylglucosamine 6-phosphate (GlcNAc6P). In terms of biological role, catalyzes the reversible isomerization-deamination of glucosamine 6-phosphate (GlcN6P) to form fructose 6-phosphate (Fru6P) and ammonium ion. The protein is Glucosamine-6-phosphate deaminase of Edwardsiella ictaluri (strain 93-146).